Reading from the N-terminus, the 131-residue chain is Large ribosomal subunit protein bL17 (131 aa).

It belongs to the bacterial ribosomal protein bL17 family. In terms of assembly, part of the 50S ribosomal subunit. Contacts protein L32.

The polypeptide is Large ribosomal subunit protein bL17 (Sodalis glossinidius (strain morsitans)).